We begin with the raw amino-acid sequence, 657 residues long: THO complex subunit 1 (657 aa).

Met1 carries the post-translational modification N-acetylmethionine. Ser2 is modified (phosphoserine). Thr4 carries the phosphothreonine modification. Residue Lys31 forms a Glycyl lysine isopeptide (Lys-Gly) (interchain with G-Cter in SUMO2) linkage. Lys133 is modified (N6-acetyllysine). A dock domain; interaction with THOC2 region spans residues 133-167; it reads KNYLLRMCNDLLRRLSKSQNTVFCGRIQLFLARLF. The disordered stretch occupies residues 194–221; the sequence is QESTLGQKHTEDREEGMDVEEGEMGDDE. Residues 206–221 show a composition bias toward acidic residues; sequence REEGMDVEEGEMGDDE. Residues 227 to 397 form a dock domain; interaction with THOC2 region; that stretch reads SIPIDYNLYR…WNSWKNEGCP (171 aa). Lys300 bears the N6-acetyllysine mark. Lys408 participates in a covalent cross-link: Glycyl lysine isopeptide (Lys-Gly) (interchain with G-Cter in SUMO2). Residues 414–430 carry the Nuclear localization signal motif; the sequence is RKRAAPEDFLGKGPNKK. The tract at residues 533–569 is disordered; the sequence is LPPPSEEIKTGEDEDEEDNDALLKENESPDVRRDKPI. Ser537 is subject to Phosphoserine. Thr542 is modified (phosphothreonine). Residues 553–569 show a composition bias toward basic and acidic residues; that stretch reads ALLKENESPDVRRDKPI. Phosphoserine is present on Ser560. The Death domain maps to 570 to 653; it reads TGEQIESFAN…DLAESLTNDT (84 aa). Lys580 participates in a covalent cross-link: Glycyl lysine isopeptide (Lys-Gly) (interchain with G-Cter in SUMO2). Lys595 participates in a covalent cross-link: Glycyl lysine isopeptide (Lys-Gly) (interchain with G-Cter in SUMO1); alternate. A Glycyl lysine isopeptide (Lys-Gly) (interchain with G-Cter in SUMO2); alternate cross-link involves residue Lys595.

This sequence belongs to the THOC1 family. Component of the THO subcomplex, which is composed of THOC1, THOC2, THOC3, THOC5, THOC6 and THOC7. The THO subcomplex interacts with DDX39B to form the THO-DDX39B complex which multimerizes into a 28-subunit tetrameric assembly. Component of the transcription/export (TREX) complex at least composed of ALYREF/THOC4, DDX39B, SARNP/CIP29, CHTOP and the THO subcomplex; in the complex interacts with THOC2, THOC5 and THOC7. TREX seems to have a dynamic structure involving ATP-dependent remodeling. Binds to the hypophosphorylated form of RB1. Interacts with RNA polymerase II. Interacts with LUZP4. Interacts with THOC5. In terms of processing, expression is altered specifically during apoptosis and is accompanied by the appearance of novel forms with smaller apparent molecular mass. Polyubiquitinated, leading to proteasomal degradation; probably involves NEDD4. In the inner ear, specifically expressed in inner and outer hair cells (at protein level).

Its subcellular location is the nucleus. The protein localises to the nucleoplasm. It is found in the nucleus matrix. The protein resides in the cytoplasm. It localises to the cytosol. Functionally, component of the THO subcomplex of the TREX complex which is thought to couple mRNA transcription, processing and nuclear export, and which specifically associates with spliced mRNA and not with unspliced pre-mRNA. Required for efficient export of polyadenylated RNA. The THOC1-THOC2-THOC3 core complex alone is sufficient to bind export factor NXF1-NXT1 and promote ATPase activity of DDX39B. TREX is recruited to spliced mRNAs by a transcription-independent mechanism, binds to mRNA upstream of the exon-junction complex (EJC) and is recruited in a splicing- and cap-dependent manner to a region near the 5' end of the mRNA where it functions in mRNA export to the cytoplasm via the TAP/NXF1 pathway. Regulates transcriptional elongation of a subset of genes. Involved in genome stability by preventing co-transcriptional R-loop formation. May play a role in hair cell formation, hence may be involved in hearing. Its function is as follows. Participates in an apoptotic pathway which is characterized by activation of caspase-6, increases in the expression of BAK1 and BCL2L1 and activation of NF-kappa-B. This pathway does not require p53/TP53, nor does the presence of p53/TP53 affect the efficiency of cell killing. Activates a G2/M cell cycle checkpoint prior to the onset of apoptosis. Apoptosis is inhibited by association with RB1. Essential for early embryonic development. Required for normal gene expression during postnatal testis development. The sequence is that of THO complex subunit 1 (Thoc1) from Mus musculus (Mouse).